The primary structure comprises 206 residues: CBS domain-containing protein CBSX3, mitochondrial (206 aa).

A mitochondrion-targeting transit peptide spans 1–39 (MQGVIRSFVSGGNVVKGSVLQHLRVINPAIQPSVFCSRS). 2 consecutive CBS domains span residues 61–127 (MKSK…GRSS) and 136–194 (MTEE…HREE).

The protein localises to the mitochondrion. This is CBS domain-containing protein CBSX3, mitochondrial (CBSX3) from Arabidopsis thaliana (Mouse-ear cress).